A 335-amino-acid polypeptide reads, in one-letter code: S-adenosylmethionine:tRNA ribosyltransferase-isomerase (335 aa).

It belongs to the QueA family. In terms of assembly, monomer.

It is found in the cytoplasm. The catalysed reaction is 7-aminomethyl-7-carbaguanosine(34) in tRNA + S-adenosyl-L-methionine = epoxyqueuosine(34) in tRNA + adenine + L-methionine + 2 H(+). The protein operates within tRNA modification; tRNA-queuosine biosynthesis. Its function is as follows. Transfers and isomerizes the ribose moiety from AdoMet to the 7-aminomethyl group of 7-deazaguanine (preQ1-tRNA) to give epoxyqueuosine (oQ-tRNA). This chain is S-adenosylmethionine:tRNA ribosyltransferase-isomerase, found in Thermosipho africanus (strain TCF52B).